Here is a 565-residue protein sequence, read N- to C-terminus: Phospholipase B-like protein C (565 aa).

An N-terminal signal peptide occupies residues 1–21 (MNKIIILISLFLNFLFGYVVC). N-linked (GlcNAc...) asparagine glycosylation is found at N53, N84, N118, N200, N201, N211, N266, N302, N406, and N485.

The protein belongs to the phospholipase B-like family.

The protein localises to the secreted. Its function is as follows. Probable phospholipase. The sequence is that of Phospholipase B-like protein C (plbC) from Dictyostelium discoideum (Social amoeba).